The primary structure comprises 150 residues: MTTPAKKRLMWDFKRLQKDPPVGISGAPQDNNIMHWNALIFGPEDTPWDGGTFKLTLHFTEDYPNKPPIVRFVSRMFHPNIYADGSICLDILQNQWSPIYDVAAVLTSIQSLLCDPNPDSPANAEAARLFSENKREYNRKVIEIVEQSYV.

The UBC core domain maps to 4 to 150 (PAKKRLMWDF…VIEIVEQSYV (147 aa)). C88 serves as the catalytic Glycyl thioester intermediate.

This sequence belongs to the ubiquitin-conjugating enzyme family. As to expression, expressed in all tissues examined. Lower levels found in leaves.

The enzyme catalyses S-ubiquitinyl-[E1 ubiquitin-activating enzyme]-L-cysteine + [E2 ubiquitin-conjugating enzyme]-L-cysteine = [E1 ubiquitin-activating enzyme]-L-cysteine + S-ubiquitinyl-[E2 ubiquitin-conjugating enzyme]-L-cysteine.. The protein operates within protein modification; protein ubiquitination. Functionally, accepts the ubiquitin from the E1 complex and catalyzes its covalent attachment to other proteins. The polypeptide is Ubiquitin-conjugating enzyme E2 3 (UBC3) (Arabidopsis thaliana (Mouse-ear cress)).